Reading from the N-terminus, the 238-residue chain is Heme oxygenase (238 aa).

His-17 lines the heme b pocket.

The protein belongs to the heme oxygenase family.

It localises to the plastid. Its subcellular location is the chloroplast. It carries out the reaction heme b + 3 reduced [NADPH--hemoprotein reductase] + 3 O2 = biliverdin IXalpha + CO + Fe(2+) + 3 oxidized [NADPH--hemoprotein reductase] + 3 H2O + H(+). Catalyzes the opening of the heme ring with the release of iron. Key enzyme in the synthesis of the chromophoric part of the photosynthetic antennae. The sequence is that of Heme oxygenase (pbsA) from Pyropia yezoensis (Susabi-nori).